The following is a 308-amino-acid chain: General transcription factor IIH subunit 3 (308 aa).

A C4-type zinc finger spans residues 268–285; that stretch reads CSVCLSIFCNFSPICTTC.

It belongs to the TFB4 family. As to quaternary structure, part of a TFIID-containing RNA polymerase II pre-initiation complex that is composed of TBP and at least GTF2A1, GTF2A2, GTF2E1, GTF2E2, GTF2F1, GTF2H2, GTF2H3, GTF2H4, GTF2H5, GTF2B, TCEA1, ERCC2, ERCC3, TAF1, TAF2, TAF3, TAF4, TAF5, TAF6, TAF7, TAF8, TAF9, TAF10, TAF11, TAF12 and TAF13. Component of the 7-subunit TFIIH core complex composed of XPB/ERCC3, XPD/ERCC2, GTF2H1, GTF2H2, GTF2H3, GTF2H4 and GTF2H5, which is active in NER. The core complex associates with the 3-subunit CDK-activating kinase (CAK) module composed of CCNH/cyclin H, CDK7 and MNAT1 to form the 10-subunit holoenzyme (holo-TFIIH) active in transcription. Interacts with RARA; the interaction requires prior phosphorylation of RARA on 'Ser-369' which then enhances interaction of RARA with CDK7.

Its subcellular location is the nucleus. Its function is as follows. Component of the general transcription and DNA repair factor IIH (TFIIH) core complex, which is involved in general and transcription-coupled nucleotide excision repair (NER) of damaged DNA and, when complexed to CAK, in RNA transcription by RNA polymerase II. In NER, TFIIH acts by opening DNA around the lesion to allow the excision of the damaged oligonucleotide and its replacement by a new DNA fragment. In transcription, TFIIH has an essential role in transcription initiation. When the pre-initiation complex (PIC) has been established, TFIIH is required for promoter opening and promoter escape. Phosphorylation of the C-terminal tail (CTD) of the largest subunit of RNA polymerase II by the kinase module CAK controls the initiation of transcription. This chain is General transcription factor IIH subunit 3 (GTF2H3), found in Homo sapiens (Human).